Consider the following 290-residue polypeptide: 33 kDa chaperonin (290 aa).

2 cysteine pairs are disulfide-bonded: C231–C233 and C263–C266.

It belongs to the HSP33 family. Post-translationally, under oxidizing conditions two disulfide bonds are formed involving the reactive cysteines. Under reducing conditions zinc is bound to the reactive cysteines and the protein is inactive.

The protein localises to the cytoplasm. Redox regulated molecular chaperone. Protects both thermally unfolding and oxidatively damaged proteins from irreversible aggregation. Plays an important role in the bacterial defense system toward oxidative stress. This chain is 33 kDa chaperonin, found in Thermotoga maritima (strain ATCC 43589 / DSM 3109 / JCM 10099 / NBRC 100826 / MSB8).